The sequence spans 319 residues: Replication factor C small subunit 2 (319 aa).

44–51 (GPPGTGKT) contacts ATP.

Belongs to the activator 1 small subunits family. RfcS subfamily. As to quaternary structure, heteromultimer composed of small subunits (RfcS) and large subunits (RfcL).

Part of the RFC clamp loader complex which loads the PCNA sliding clamp onto DNA. The sequence is that of Replication factor C small subunit 2 from Pyrobaculum aerophilum (strain ATCC 51768 / DSM 7523 / JCM 9630 / CIP 104966 / NBRC 100827 / IM2).